The primary structure comprises 335 residues: Nucleoid-associated protein YejK (335 aa).

This sequence belongs to the YejK family.

It localises to the cytoplasm. Its subcellular location is the nucleoid. The polypeptide is Nucleoid-associated protein YejK (Escherichia coli (strain K12 / MC4100 / BW2952)).